A 415-amino-acid polypeptide reads, in one-letter code: Arrestin domain-containing protein 4 (415 aa).

2 consecutive short sequence motifs (PPxY motif) follow at residues Pro-347–Tyr-350 and Pro-392–Tyr-395.

Belongs to the arrestin family. In terms of assembly, interacts with ADRB2. Interacts (via PPxY motifs) with ITCH, NEDD4L and WWP2. Interacts with AVPR2. Identified in a complex containing at least ARRDC4, AVPR2 and HGS. Interacts with SLC11A2; controls the incorporation of SLC11A2 into extracellular vesicles through an ubiquitination-dependent mechanism. Interacts with TRIM65.

The protein resides in the early endosome. It is found in the cell membrane. Its subcellular location is the cytoplasmic vesicle. Its function is as follows. Functions as an adapter recruiting ubiquitin-protein ligases to their specific substrates. Plays a role in endocytosis of activated G protein-coupled receptors (GPCRs). Through an ubiquitination-dependent mechanism also plays a role in the incorporation of SLC11A2 into extracellular vesicles. May play a role in glucose uptake. Participates in innate immune response by promoting IFIH1/MDA5 activation through interaction with TRIM65. This chain is Arrestin domain-containing protein 4, found in Mus musculus (Mouse).